Reading from the N-terminus, the 513-residue chain is E3 ubiquitin-protein ligase XBAT33 (513 aa).

ANK repeat units follow at residues 44–73, 77–106, 111–140, 171–200, and 214–244; these read GLNS…DVNS, CGQT…NVTR, AGRT…PSDK, GGIT…NVSA, and AGST…KMTL. An RING-type zinc finger spans residues 312 to 362; that stretch reads CAVCLERTCTVAAEGCEHQLCVRCALYLCSSSNVPSVTVGPPGSIPCPLCR. 2 disordered regions span residues 397–417 and 455–483; these read DTTD…SKTR and HGTE…EEGQ. Basic and acidic residues-rich tracts occupy residues 455 to 466 and 474 to 483; these read HGTERHSEEHVE and TEQEKIEEGQ.

The enzyme catalyses S-ubiquitinyl-[E2 ubiquitin-conjugating enzyme]-L-cysteine + [acceptor protein]-L-lysine = [E2 ubiquitin-conjugating enzyme]-L-cysteine + N(6)-ubiquitinyl-[acceptor protein]-L-lysine.. It functions in the pathway protein modification; protein ubiquitination. Possesses E3 ubiquitin-protein ligase activity when associated with the E2 enzyme UBC8 in vitro. This Arabidopsis thaliana (Mouse-ear cress) protein is E3 ubiquitin-protein ligase XBAT33 (XBAT33).